We begin with the raw amino-acid sequence, 396 residues long: 1-deoxy-D-xylulose 5-phosphate reductoisomerase (396 aa).

Positions 10, 11, 12, 13, and 123 each coordinate NADPH. Lys-124 is a binding site for 1-deoxy-D-xylulose 5-phosphate. Glu-125 provides a ligand contact to NADPH. Residue Asp-149 participates in Mn(2+) binding. 1-deoxy-D-xylulose 5-phosphate-binding residues include Ser-150, Glu-151, Ser-185, and His-208. Position 151 (Glu-151) interacts with Mn(2+). Gly-214 provides a ligand contact to NADPH. Positions 221, 226, 227, and 230 each coordinate 1-deoxy-D-xylulose 5-phosphate. Residue Glu-230 coordinates Mn(2+).

Belongs to the DXR family. Mg(2+) serves as cofactor. Requires Mn(2+) as cofactor.

The catalysed reaction is 2-C-methyl-D-erythritol 4-phosphate + NADP(+) = 1-deoxy-D-xylulose 5-phosphate + NADPH + H(+). It participates in isoprenoid biosynthesis; isopentenyl diphosphate biosynthesis via DXP pathway; isopentenyl diphosphate from 1-deoxy-D-xylulose 5-phosphate: step 1/6. Functionally, catalyzes the NADPH-dependent rearrangement and reduction of 1-deoxy-D-xylulose-5-phosphate (DXP) to 2-C-methyl-D-erythritol 4-phosphate (MEP). This Shewanella sp. (strain MR-7) protein is 1-deoxy-D-xylulose 5-phosphate reductoisomerase.